The chain runs to 59 residues: Temporin-CDYd (59 aa).

The signal sequence occupies residues 1-22 (MFTLKKSMLLLLFLGTISLTLC). Residues 23–42 (EEERDANEEEENGGEVKEEE) constitute a propeptide that is removed on maturation.

It belongs to the frog skin active peptide (FSAP) family. Temporin subfamily. As to expression, expressed by the skin glands.

Its subcellular location is the secreted. In terms of biological role, antimicrobial peptide. The sequence is that of Temporin-CDYd from Rana dybowskii (Dybovsky's frog).